The sequence spans 321 residues: Peptidase 1 (321 aa).

The signal sequence occupies residues M1 to A18. A propeptide spans R19 to E98 (activation peptide). 3 disulfides stabilise this stretch: C102–C216, C130–C170, and C164–C202. Residue C133 is part of the active site. N151 is a glycosylation site (N-linked (GlcNAc...) asparagine). Residues H269 and R288 contribute to the active site.

The protein belongs to the peptidase C1 family. In terms of assembly, monomer.

The protein localises to the secreted. It carries out the reaction Broad endopeptidase specificity.. Functionally, thiol protease that hydrolyzes proteins, with a preference for Phe or basic residues. This Dermatophagoides farinae (American house dust mite) protein is Peptidase 1 (DERF1).